Here is a 1218-residue protein sequence, read N- to C-terminus: Coatomer subunit alpha-1 (1218 aa).

WD repeat units lie at residues 7–48 (TKSN…DRFD), 49–88 (EHDG…CLFT), 91–132 (GHLD…AVLT), 133–172 (GHNH…KKTV), 202–241 (GHDR…AWEV), 246–285 (GHMN…GIQT), 288–326 (REHD…PAFS), 363–404 (SLNQ…AGRA), and 450–489 (PLPI…GELQ). The interval 857-882 (NGGDGFDAEEGEANEEDGEEGGWDLE) is disordered. Over residues 862 to 882 (FDAEEGEANEEDGEEGGWDLE) the composition is skewed to acidic residues.

In terms of assembly, oligomeric complex that consists of at least the alpha, beta, beta', gamma, delta, epsilon and zeta subunits.

It localises to the cytoplasm. It is found in the golgi apparatus membrane. Its subcellular location is the cytoplasmic vesicle. The protein localises to the COPI-coated vesicle membrane. In terms of biological role, the coatomer is a cytosolic protein complex that binds to dilysine motifs and reversibly associates with Golgi non-clathrin-coated vesicles, which further mediate biosynthetic protein transport from the ER, via the Golgi up to the trans Golgi network. Coatomer complex is required for budding from Golgi membranes, and is essential for the retrograde Golgi-to-ER transport of dilysine-tagged proteins. The chain is Coatomer subunit alpha-1 from Oryza sativa subsp. japonica (Rice).